Reading from the N-terminus, the 206-residue chain is Dephospho-CoA kinase (206 aa).

Residues 4 to 200 enclose the DPCK domain; the sequence is IVALTGGIGS…AYYLQLASQF (197 aa). 12–17 is a binding site for ATP; it reads GSGKST.

The protein belongs to the CoaE family.

The protein localises to the cytoplasm. It carries out the reaction 3'-dephospho-CoA + ATP = ADP + CoA + H(+). It participates in cofactor biosynthesis; coenzyme A biosynthesis; CoA from (R)-pantothenate: step 5/5. In terms of biological role, catalyzes the phosphorylation of the 3'-hydroxyl group of dephosphocoenzyme A to form coenzyme A. The sequence is that of Dephospho-CoA kinase from Escherichia coli O6:H1 (strain CFT073 / ATCC 700928 / UPEC).